Reading from the N-terminus, the 446-residue chain is Neuropeptide Y receptor type 5 (446 aa).

Residues 1–42 are Extracellular-facing; that stretch reads MDLELQDFYNKTLATENNTAATRNSDFPVWDDYKSSVDDLQY. N-linked (GlcNAc...) asparagine glycosylation is found at Asn-10 and Asn-17. Residues 43–63 traverse the membrane as a helical segment; the sequence is FLIGLYTFVSLLGFMGNLLIL. The Cytoplasmic segment spans residues 64–77; sequence MALMRKRNQKTMVN. The chain crosses the membrane as a helical span at residues 78–98; the sequence is FLIGNLAFSDILVVLFCSPFT. The Extracellular segment spans residues 99 to 117; sequence LTSVLLDQWMFGKVMCHIM. A disulfide bond links Cys-114 and Cys-198. The helical transmembrane segment at 118–138 threads the bilayer; the sequence is PFLQCVSVLVSTLILISIAIV. At 139 to 156 the chain is on the cytoplasmic side; sequence RYHMIKHPISNNLTANHG. Residues 157-177 form a helical membrane-spanning segment; the sequence is YFLIATVWTLGFAICSPLPVF. Topologically, residues 178–208 are extracellular; sequence HSLVELQETFDSALLSSRYLCVESWPSDSYR. The helical transmembrane segment at 209–229 threads the bilayer; it reads IAFTISLLLVQYILPLVCLTV. Over 230-369 the chain is Cytoplasmic; that stretch reads SHTSVCRSIS…KKRSRSVFYR (140 aa). A helical membrane pass occupies residues 370–390; sequence LTILILVFAVSWMPLHLFHVV. At 391-407 the chain is on the extracellular side; it reads TDFNDNLISNRHFKLVY. The helical transmembrane segment at 408–428 threads the bilayer; the sequence is CICHLLGMMSCCLNPILYGFL. Residues 429–446 are Cytoplasmic-facing; the sequence is NNGIKADLISLIQCLHMS. A lipid anchor (S-palmitoyl cysteine) is attached at Cys-442.

Belongs to the G-protein coupled receptor 1 family.

The protein resides in the cell membrane. Its function is as follows. Receptor for neuropeptide Y and peptide YY. The activity of this receptor is mediated by G proteins that inhibit adenylate cyclase activity. Seems to be associated with food intake. Could be involved in feeding disorders. In Canis lupus familiaris (Dog), this protein is Neuropeptide Y receptor type 5 (NPY5R).